Consider the following 102-residue polypeptide: Protein CASC2, isoform 3 (102 aa).

In terms of tissue distribution, expressed in normal and neoplastic endometrial tissues.

In terms of biological role, may act as a potential tumor suppressor. This is Protein CASC2, isoform 3 (CASC2) from Homo sapiens (Human).